We begin with the raw amino-acid sequence, 452 residues long: Elongation factor Tu, mitochondrial (452 aa).

The N-terminal 43 residues, 1-43 (MAAATLLRATPRFSGLCASPTPFLQGRLRPLKAPASPFLCRGL), are a transit peptide targeting the mitochondrion. Residues 55–251 (KPHVNVGTIG…AVDTYIPVPT (197 aa)) form the tr-type G domain. Residues 64–71 (GHVDHGKT) are G1. GTP is bound by residues D67, G69, K70, T71, and T72. T71 provides a ligand contact to Mg(2+). N6-acetyllysine is present on K79. Position 88 is an N6-acetyllysine; alternate (K88). N6-succinyllysine; alternate is present on K88. The interval 105 to 109 (GITIN) is G2. The G3 stretch occupies residues 126 to 129 (DCPG). Residues N181, D184, S219, A220, and L221 each contribute to the GTP site. The tract at residues 181-184 (NKAD) is G4. A G5 region spans residues 219–221 (SAL). K234 carries the post-translational modification N6-succinyllysine. K256 is modified (N6-acetyllysine). Residue T278 is modified to Phosphothreonine. Residue K286 is modified to N6-succinyllysine. S312 is modified (phosphoserine). Residues K361 and K418 each carry the N6-acetyllysine modification.

The protein belongs to the TRAFAC class translation factor GTPase superfamily. Classic translation factor GTPase family. EF-Tu/EF-1A subfamily. As to quaternary structure, interacts with NLRX1. Interacts with ATG16L1.

The protein localises to the mitochondrion. The catalysed reaction is GTP + H2O = GDP + phosphate + H(+). In terms of biological role, GTP hydrolase that promotes the GTP-dependent binding of aminoacyl-tRNA to the A-site of ribosomes during protein biosynthesis. Also plays a role in the regulation of autophagy and innate immunity. Recruits ATG5-ATG12 and NLRX1 at mitochondria and serves as a checkpoint of the RIGI-MAVS pathway. In turn, inhibits RLR-mediated type I interferon while promoting autophagy. This Mus musculus (Mouse) protein is Elongation factor Tu, mitochondrial (Tufm).